A 451-amino-acid polypeptide reads, in one-letter code: Phosphoglucosamine mutase (451 aa).

Residue S103 is the Phosphoserine intermediate of the active site. 4 residues coordinate Mg(2+): S103, D243, D245, and D247. S103 is modified (phosphoserine).

Belongs to the phosphohexose mutase family. Requires Mg(2+) as cofactor. Activated by phosphorylation.

The catalysed reaction is alpha-D-glucosamine 1-phosphate = D-glucosamine 6-phosphate. In terms of biological role, catalyzes the conversion of glucosamine-6-phosphate to glucosamine-1-phosphate. The polypeptide is Phosphoglucosamine mutase (Limosilactobacillus reuteri subsp. reuteri (strain JCM 1112) (Lactobacillus reuteri)).